Consider the following 303-residue polypeptide: uncharacterized protein (303 aa).

An S4 RNA-binding domain is found at 15-74; the sequence is ERIDKFLASTENDWSRTQVQQWVKDGQVVVNGSAVKANYKIQPGDQVTVTVPEPEALDVL. The active site involves aspartate 138.

This sequence belongs to the pseudouridine synthase RluA family.

It carries out the reaction a uridine in RNA = a pseudouridine in RNA. This is an uncharacterized protein from Bacillus subtilis (strain 168).